We begin with the raw amino-acid sequence, 490 residues long: MERKNVESLFAHAGAINALVIGDLMLDQYLWGKAERISPEAPVQVVDVTREEIRIGGAGNVANNLVALGCRVSVASVVGGDENGTILLHAFSGKGIDVTGIVEDPSRTTSRKTRVLASNQQIVRIDRESRDEIGPDNERRIVDYLNAHGDRFNVILVSDYLKGVLTPTLLAEVIAFARKREIPVVVDPKGSDYAKYRGATVLTPNRKEAEAASGIAIRDDESLCRAGERLLETADLTALVITRSEEGMSLFLRGGQVVHIPTYAREVFDVTGAGDTVLAVLGMALAGGVGFADGARLANVAAGVAVGKVGTSTVSPAEIVGSLGFQHGEGDAKVKNLDVLAGIIAAEKAQGKRVVFTNGCFDLLHVGHVKYLQKARSFGDLLVLGLNSDASIRRLKGEKRPLIGQEERAHILAALDCIDYVVVFDEDTPLNLIETLRPAVLVKGGDYTLDGVVGREVVESYGGRVELVAFVDGRSTTNIIEKILKAYGEE.

A ribokinase region spans residues 1 to 330 (MERKNVESLF…GSLGFQHGEG (330 aa)). 205–208 (NRKE) is a binding site for ATP. Residue D275 is part of the active site. The segment at 356–490 (FTNGCFDLLH…EKILKAYGEE (135 aa)) is cytidylyltransferase.

In the N-terminal section; belongs to the carbohydrate kinase PfkB family. The protein in the C-terminal section; belongs to the cytidylyltransferase family. In terms of assembly, homodimer.

The enzyme catalyses D-glycero-beta-D-manno-heptose 7-phosphate + ATP = D-glycero-beta-D-manno-heptose 1,7-bisphosphate + ADP + H(+). The catalysed reaction is D-glycero-beta-D-manno-heptose 1-phosphate + ATP + H(+) = ADP-D-glycero-beta-D-manno-heptose + diphosphate. It participates in nucleotide-sugar biosynthesis; ADP-L-glycero-beta-D-manno-heptose biosynthesis; ADP-L-glycero-beta-D-manno-heptose from D-glycero-beta-D-manno-heptose 7-phosphate: step 1/4. The protein operates within nucleotide-sugar biosynthesis; ADP-L-glycero-beta-D-manno-heptose biosynthesis; ADP-L-glycero-beta-D-manno-heptose from D-glycero-beta-D-manno-heptose 7-phosphate: step 3/4. Functionally, catalyzes the phosphorylation of D-glycero-D-manno-heptose 7-phosphate at the C-1 position to selectively form D-glycero-beta-D-manno-heptose-1,7-bisphosphate. Catalyzes the ADP transfer from ATP to D-glycero-beta-D-manno-heptose 1-phosphate, yielding ADP-D-glycero-beta-D-manno-heptose. This is Bifunctional protein HldE from Geobacter sulfurreducens (strain ATCC 51573 / DSM 12127 / PCA).